Here is a 283-residue protein sequence, read N- to C-terminus: Pantothenate synthetase (283 aa).

ATP is bound at residue 30-37 (MGYLHEGH). H37 acts as the Proton donor in catalysis. Q61 serves as a coordination point for (R)-pantoate. Q61 serves as a coordination point for beta-alanine. Residue 147 to 150 (GQKD) coordinates ATP. Q153 provides a ligand contact to (R)-pantoate. ATP is bound by residues V176 and 184 to 187 (LSSR).

Belongs to the pantothenate synthetase family. In terms of assembly, homodimer.

The protein resides in the cytoplasm. The enzyme catalyses (R)-pantoate + beta-alanine + ATP = (R)-pantothenate + AMP + diphosphate + H(+). It functions in the pathway cofactor biosynthesis; (R)-pantothenate biosynthesis; (R)-pantothenate from (R)-pantoate and beta-alanine: step 1/1. In terms of biological role, catalyzes the condensation of pantoate with beta-alanine in an ATP-dependent reaction via a pantoyl-adenylate intermediate. This chain is Pantothenate synthetase, found in Moorella thermoacetica (strain ATCC 39073 / JCM 9320).